A 585-amino-acid polypeptide reads, in one-letter code: MVCREQLSKNQVKWVFAGITCVSVVVIAAIVLAITLRRPGCELEACSPDADMLDYLLSLGQISRRDALEVTWYHAANSKKAMTAALNSNITVLEADVNVEGLGTANETGVPIMAHPPTIYSDNTLEQWLDAVLGSSQKGIKLDFKNIKAVGPSLDLLRQLTEEGKVRRPIWINADILKGPNMLISTEVNATQFLALVQEKYPKATLSPGWTTFYMSTSPNRTYTQAMVEKMHELVGGVPQRVTFPVRSSMVRAAWPHFSWLLSQSERYSLTLWQAASDPMSVEDLLYVRDNTAVHQVYYDIFEPLLSQFKQLALNATRKPMYYTGGSLIPLLQLPGDDGLNVEWLVPDVQGSGKTATMTLPDTEGMILLNTGLEGTVAENPVPIVHTPSGNILTLESCLQQLATHPGHWGIHLQIAEPAALRPSLALLARLSSLGLLHWPVWVGAKISHGSFSVPGHVAGRELLTAVAEVFPHVTVAPGWPEEVLGSGYREQLLTDMLELCQGLWQPVSFQMQAMLLGHSTAGAIGRLLASSPRATVTVEHNPAGGDYASVRTALLAARAVDRTRVYYRLPQGYHKDLLAHVGRN.

Residues 14-34 (WVFAGITCVSVVVIAAIVLAI) traverse the membrane as a helical segment.

This sequence belongs to the menorin family.

It localises to the membrane. This chain is Protein FAM151A (FAM151A), found in Homo sapiens (Human).